Consider the following 129-residue polypeptide: Large ribosomal subunit protein bL17 (129 aa).

The protein belongs to the bacterial ribosomal protein bL17 family. In terms of assembly, part of the 50S ribosomal subunit. Contacts protein L32.

This is Large ribosomal subunit protein bL17 from Polynucleobacter asymbioticus (strain DSM 18221 / CIP 109841 / QLW-P1DMWA-1) (Polynucleobacter necessarius subsp. asymbioticus).